The sequence spans 329 residues: Putative 1-aminocyclopropane-1-carboxylate deaminase (329 aa).

K54 carries the N6-(pyridoxal phosphate)lysine modification.

Belongs to the ACC deaminase/D-cysteine desulfhydrase family. Requires pyridoxal 5'-phosphate as cofactor.

The catalysed reaction is 1-aminocyclopropane-1-carboxylate + H2O = 2-oxobutanoate + NH4(+). The chain is Putative 1-aminocyclopropane-1-carboxylate deaminase from Pyrococcus furiosus (strain ATCC 43587 / DSM 3638 / JCM 8422 / Vc1).